A 158-amino-acid chain; its full sequence is NADPH-dependent 7-cyano-7-deazaguanine reductase (158 aa).

Cys56 functions as the Thioimide intermediate in the catalytic mechanism. Residue Asp63 is the Proton donor of the active site. Substrate is bound by residues Leu78–Ser80 and His97–Glu98.

Belongs to the GTP cyclohydrolase I family. QueF type 1 subfamily.

It is found in the cytoplasm. The catalysed reaction is 7-aminomethyl-7-carbaguanine + 2 NADP(+) = 7-cyano-7-deazaguanine + 2 NADPH + 3 H(+). Its pathway is tRNA modification; tRNA-queuosine biosynthesis. Catalyzes the NADPH-dependent reduction of 7-cyano-7-deazaguanine (preQ0) to 7-aminomethyl-7-deazaguanine (preQ1). In Rhodopseudomonas palustris (strain TIE-1), this protein is NADPH-dependent 7-cyano-7-deazaguanine reductase.